The following is a 530-amino-acid chain: Bifunctional purine biosynthesis protein PurH (530 aa).

Residues 1 to 148 (MNNARPIRRA…KNHKDVTIVV (148 aa)) enclose the MGS-like domain.

This sequence belongs to the PurH family.

The enzyme catalyses (6R)-10-formyltetrahydrofolate + 5-amino-1-(5-phospho-beta-D-ribosyl)imidazole-4-carboxamide = 5-formamido-1-(5-phospho-D-ribosyl)imidazole-4-carboxamide + (6S)-5,6,7,8-tetrahydrofolate. It catalyses the reaction IMP + H2O = 5-formamido-1-(5-phospho-D-ribosyl)imidazole-4-carboxamide. The protein operates within purine metabolism; IMP biosynthesis via de novo pathway; 5-formamido-1-(5-phospho-D-ribosyl)imidazole-4-carboxamide from 5-amino-1-(5-phospho-D-ribosyl)imidazole-4-carboxamide (10-formyl THF route): step 1/1. Its pathway is purine metabolism; IMP biosynthesis via de novo pathway; IMP from 5-formamido-1-(5-phospho-D-ribosyl)imidazole-4-carboxamide: step 1/1. The chain is Bifunctional purine biosynthesis protein PurH from Vibrio campbellii (strain ATCC BAA-1116).